We begin with the raw amino-acid sequence, 616 residues long: Dihydroxy-acid dehydratase (616 aa).

Asp-81 lines the Mg(2+) pocket. Cys-122 is a binding site for [2Fe-2S] cluster. Residues Asp-123 and Lys-124 each coordinate Mg(2+). Lys-124 carries the post-translational modification N6-carboxylysine. Cys-195 contacts [2Fe-2S] cluster. Glu-491 is a Mg(2+) binding site. The active-site Proton acceptor is the Ser-517.

The protein belongs to the IlvD/Edd family. Homodimer. It depends on [2Fe-2S] cluster as a cofactor. The cofactor is Mg(2+).

It catalyses the reaction (2R)-2,3-dihydroxy-3-methylbutanoate = 3-methyl-2-oxobutanoate + H2O. The enzyme catalyses (2R,3R)-2,3-dihydroxy-3-methylpentanoate = (S)-3-methyl-2-oxopentanoate + H2O. It functions in the pathway amino-acid biosynthesis; L-isoleucine biosynthesis; L-isoleucine from 2-oxobutanoate: step 3/4. Its pathway is amino-acid biosynthesis; L-valine biosynthesis; L-valine from pyruvate: step 3/4. Functions in the biosynthesis of branched-chain amino acids. Catalyzes the dehydration of (2R,3R)-2,3-dihydroxy-3-methylpentanoate (2,3-dihydroxy-3-methylvalerate) into 2-oxo-3-methylpentanoate (2-oxo-3-methylvalerate) and of (2R)-2,3-dihydroxy-3-methylbutanoate (2,3-dihydroxyisovalerate) into 2-oxo-3-methylbutanoate (2-oxoisovalerate), the penultimate precursor to L-isoleucine and L-valine, respectively. The protein is Dihydroxy-acid dehydratase of Klebsiella pneumoniae (strain 342).